We begin with the raw amino-acid sequence, 82 residues long: Cyclin-dependent kinases regulatory subunit (82 aa).

The protein belongs to the CKS family. In terms of assembly, forms a homohexamer that can probably bind six kinase subunits.

Its function is as follows. Binds to the catalytic subunit of the cyclin dependent kinases and is essential for their biological function. The chain is Cyclin-dependent kinases regulatory subunit (cks1) from Dictyostelium discoideum (Social amoeba).